Reading from the N-terminus, the 520-residue chain is EGF domain-specific O-linked N-acetylglucosamine transferase (520 aa).

A signal peptide spans 1–16; it reads MPILPILIGILHLSLA. 3 N-linked (GlcNAc...) asparagine glycosylation sites follow: Asn52, Asn176, and Asn250. A Required for optimal activity motif is present at residues 292 to 294; it reads DVE. Asn479 carries an N-linked (GlcNAc...) asparagine glycan. The short motif at 517–520 is the Prevents secretion from ER element; it reads RNEL.

It depends on a divalent metal cation as a cofactor.

It localises to the endoplasmic reticulum lumen. It carries out the reaction L-seryl-[protein] + UDP-N-acetyl-alpha-D-glucosamine = 3-O-(N-acetyl-beta-D-glucosaminyl)-L-seryl-[protein] + UDP + H(+). The catalysed reaction is L-threonyl-[protein] + UDP-N-acetyl-alpha-D-glucosamine = 3-O-(N-acetyl-beta-D-glucosaminyl)-L-threonyl-[protein] + UDP + H(+). Its function is as follows. Catalyzes the transfer of a single N-acetylglucosamine from UDP-GlcNAc to a serine or threonine residue in extracellular proteins resulting in their modification with a beta-linked N-acetylglucosamine (O-GlcNAc). Specifically glycosylates the Thr residue located between the fifth and sixth conserved cysteines of folded EGF-like domains. Involved in epithelial cell adhesion/interaction with the extracellular matrix by mediating glycosylation of proteins in the secretory pathway, such as Dumpy (Dp). The polypeptide is EGF domain-specific O-linked N-acetylglucosamine transferase (Eogt) (Drosophila melanogaster (Fruit fly)).